The following is a 578-amino-acid chain: Translation initiation factor eIF2B subunit gamma (578 aa).

Phosphoserine occurs at positions 296 and 300. 2 disordered regions span residues 298–337 (QASF…SATS) and 535–578 (DDSV…LFER). T306 bears the Phosphothreonine mark. Over residues 544 to 578 (EIAEETDSDDRSDEDSDDSEYTDEYEYEDDGLFER) the composition is skewed to acidic residues.

Belongs to the eIF-2B gamma/epsilon subunits family. Component of the translation initiation factor 2B (eIF2B) complex which is a heterodecamer of two sets of five different subunits: alpha, beta, gamma, delta and epsilon. Subunits alpha, beta and delta comprise a regulatory subcomplex and subunits epsilon and gamma comprise a catalytic subcomplex. Within the complex, the hexameric regulatory complex resides at the center, with the two heterodimeric catalytic subcomplexes bound on opposite sides.

The protein resides in the cytoplasm. It is found in the cytosol. In terms of biological role, acts as a component of the translation initiation factor 2B (eIF2B) complex, which catalyzes the exchange of GDP for GTP on the eukaryotic initiation factor 2 (eIF2) complex gamma subunit. Its guanine nucleotide exchange factor activity is repressed when bound to eIF2 complex phosphorylated on the alpha subunit, thereby limiting the amount of methionyl-initiator methionine tRNA available to the ribosome and consequently global translation is repressed. It activates the synthesis of GCN4 in yeast under amino acid starvation conditions by suppressing the inhibitory effects of multiple AUG codons present in the leader of GCN4 mRNA. It may promote either repression or activation of GCN4 expression depending on amino acid availability. GCD1 stabilizes the interaction between eIF2 and GCD6 and stimulates the catalytic activity in vitro. This chain is Translation initiation factor eIF2B subunit gamma (GCD1), found in Saccharomyces cerevisiae (strain ATCC 204508 / S288c) (Baker's yeast).